The following is a 533-amino-acid chain: Di/tripeptide-binding protein 3 (533 aa).

The N-terminal stretch at 1 to 24 (MRKILPLRAWLAAGLILGSPFSHA) is a signal peptide.

It belongs to the bacterial solute-binding protein 5 family. The complex is composed of two ATP-binding proteins (DppD and DppF), two transmembrane proteins (DppB and DppC) and a solute-binding protein (DppA3). Five orthologous SBPs (DppA1-A5) are present in P.aeruginosa, which increases the substrate specificity of the DppBCDF transporter.

Functionally, part of the ABC transporter DppABCDF involved in the uptake of various di/tripeptides. Prefers dipeptides with acidic residues at the C-terminal end. Involved in the uptake of phaseolotoxin, a toxic tripeptide inhibiting the enzyme ornithine carbamoyltransferase. The chain is Di/tripeptide-binding protein 3 from Pseudomonas aeruginosa (strain UCBPP-PA14).